The sequence spans 229 residues: Uracil-DNA glycosylase (229 aa).

The Proton acceptor role is filled by Asp-64.

Belongs to the uracil-DNA glycosylase (UDG) superfamily. UNG family.

It localises to the cytoplasm. The catalysed reaction is Hydrolyzes single-stranded DNA or mismatched double-stranded DNA and polynucleotides, releasing free uracil.. Excises uracil residues from the DNA which can arise as a result of misincorporation of dUMP residues by DNA polymerase or due to deamination of cytosine. The chain is Uracil-DNA glycosylase from Escherichia coli (strain 55989 / EAEC).